The chain runs to 497 residues: Signal recognition particle subunit SRP54 2 (497 aa).

Residues M1–L295 form a G-domain region. Residues G108 to T115, D190 to R194, and T248 to D251 each bind GTP. Positions G296–D497 are M-domain.

The protein belongs to the GTP-binding SRP family. SRP54 subfamily. Component of a signal recognition particle (SRP) complex that consists of a 7SL RNA molecule of 300 nucleotides and six protein subunits: SRP72, SRP68, SRP54, SRP19, SRP14 and SRP9.

It localises to the cytoplasm. Its subcellular location is the endoplasmic reticulum. It carries out the reaction GTP + H2O = GDP + phosphate + H(+). Functionally, component of the signal recognition particle (SRP) complex, a ribonucleoprotein complex that mediates the cotranslational targeting of secretory and membrane proteins to the endoplasmic reticulum (ER). As part of the SRP complex, associates with the SRP receptor (SR) component SRPRA to target secretory proteins to the endoplasmic reticulum membrane. Binds to the signal sequence of presecretory proteins when they emerge from the ribosomes. Displays basal GTPase activity, and stimulates reciprocal GTPase activation of the SR subunit SRPRA. Forms a guanosine 5'-triphosphate (GTP)-dependent complex with the SR subunit SRPRA. SR compaction and GTPase mediated rearrangement of SR drive SRP-mediated cotranslational protein translocation into the ER. Requires the presence of SRP9/SRP14 and/or SRP19 to stably interact with RNA. This Hordeum vulgare (Barley) protein is Signal recognition particle subunit SRP54 2 (SRP54-2).